Reading from the N-terminus, the 447-residue chain is 3-phosphoshikimate 1-carboxyvinyltransferase (447 aa).

Lys25, Ser26, and Arg30 together coordinate 3-phosphoshikimate. Lys25 is a binding site for phosphoenolpyruvate. Gly96 and Arg124 together coordinate phosphoenolpyruvate. Positions 171, 172, 173, 203, 325, and 352 each coordinate 3-phosphoshikimate. Residue Gln173 participates in phosphoenolpyruvate binding. The Proton acceptor role is filled by Asp325. Arg356, Arg400, and Lys425 together coordinate phosphoenolpyruvate.

The protein belongs to the EPSP synthase family. As to quaternary structure, monomer.

It localises to the cytoplasm. The enzyme catalyses 3-phosphoshikimate + phosphoenolpyruvate = 5-O-(1-carboxyvinyl)-3-phosphoshikimate + phosphate. It functions in the pathway metabolic intermediate biosynthesis; chorismate biosynthesis; chorismate from D-erythrose 4-phosphate and phosphoenolpyruvate: step 6/7. Its function is as follows. Catalyzes the transfer of the enolpyruvyl moiety of phosphoenolpyruvate (PEP) to the 5-hydroxyl of shikimate-3-phosphate (S3P) to produce enolpyruvyl shikimate-3-phosphate and inorganic phosphate. This Bordetella petrii (strain ATCC BAA-461 / DSM 12804 / CCUG 43448) protein is 3-phosphoshikimate 1-carboxyvinyltransferase.